The sequence spans 315 residues: Serine/threonine-protein phosphatase PP2A catalytic subunit 3 (315 aa).

Mn(2+) is bound by residues Asp62, His64, Asp90, and Asn122. Catalysis depends on His123, which acts as the Proton donor. Residues His172 and His247 each coordinate Mn(2+). Residues 294–315 (QFEPAPRENEPHTTRRVPDYFL) form a disordered region. Basic and acidic residues predominate over residues 298–315 (APRENEPHTTRRVPDYFL). Position 315 is a leucine methyl ester (Leu315).

The protein belongs to the PPP phosphatase family. PP-2A subfamily. Mn(2+) is required as a cofactor. Reversibly methyl esterified on Leu-315 by leucine carboxyl methyltransferase 1 (PPM1) and protein phosphatase methylesterase 1 (PPE1). Carboxyl methylation influences the affinity of the catalytic subunit for the different regulatory subunits, thereby modulating the PP2A holoenzyme's substrate specificity, enzyme activity and cellular localization.

The catalysed reaction is O-phospho-L-seryl-[protein] + H2O = L-seryl-[protein] + phosphate. It catalyses the reaction O-phospho-L-threonyl-[protein] + H2O = L-threonyl-[protein] + phosphate. The chain is Serine/threonine-protein phosphatase PP2A catalytic subunit 3 (Ppn3) from Paramecium tetraurelia.